A 1822-amino-acid polypeptide reads, in one-letter code: CDK5 regulatory subunit-associated protein 2 (1822 aa).

The interval 50–93 (KVSPTRARNMKDFENQITELKKENFNLKLRIYFLEERIQQEFAG) is CM1 motif; interacts with the gTuRC. Positions 57–195 (RNMKDFENQI…TEKALRLSLE (139 aa)) are interaction with NCKAP5L. Phosphoserine is present on residues Ser485 and Ser544. Positions 1022 to 1046 (FQDNPGEQEGPETTQSAGRDKDMDS) are disordered. Thr1195 is subject to Phosphothreonine. The interaction with PCNT and AKAP9 stretch occupies residues 1201-1822 (GKMLESLKQQ…GASSPSRPGS (622 aa)). Ser1243 and Ser1245 each carry phosphoserine. The interval 1350-1391 (YHHLLPESPEPSASHALSDDEMSEKSFLSRDPKPDSDTEKYP) is disordered. The span at 1372–1389 (SEKSFLSRDPKPDSDTEK) shows a compositional bias: basic and acidic residues. Phosphoserine occurs at positions 1497, 1592, and 1595. Residues 1655 to 1697 (HMLGLIEDYDALYKQISWGQTLLAKMDVQTQEALSPTSHKLGP) are interaction with CDK5R1. The required for centrosomal attachment, Golgi targeting and CALM1 interaction stretch occupies residues 1655 to 1822 (HMLGLIEDYD…GASSPSRPGS (168 aa)). Residues 1688-1822 (LSPTSHKLGP…GASSPSRPGS (135 aa)) are interaction with PCNT. The segment at 1790 to 1799 (VITHQVLRKA) is required for centrosomal attachment, Golgi localization and CALM1 interaction. A Phosphoserine modification is found at Ser1822.

Homodimer. Interacts with CDK5R1 (p35 form). CDK5RAP1, CDK5RAP2 and CDK5RAP3 show competitive binding to CDK5R1. May form a complex with CDK5R1 and CDK5. Interacts with pericentrin/PCNT; the interaction is leading to centrosomal and Golgi localization of CDK5RAP2 and PCNT. Interacts with AKAP9; the interaction targets CDK5RAP2 and AKAP9 to Golgi apparatus. Interacts with TUBG1; the interaction is leading to the centrosomal localization of CDK5RAP2 and TUBG1. Interacts with TUBGCP3. Interacts with CALM1. Interacts with CDC20. Interacts with CEP68; degradation of CEP68 in early mitosis leads to removal of CDK5RAP2 from the centrosome which promotes centriole disengagement and subsequent centriole separation. Interacts with NCKAP5L. Interacts with LGALS3BP; this interaction may connect the pericentrosomal complex to the gamma-tubulin ring complex (gTuRC) to promote microtubule assembly and acetylation. Contrary to human, chimpanzee, bovine and dog orthologous proteins, does not interact with EB1/MAPRE1, possibly due to a divergence at the level of the critical residue 939, which is a proline in MAPRE1-binding orthologs and a leucine in mouse and rat. Interacts with CCDC66. Associates (via CM1 motif) with TUBGCP2 of the gTuRC; the interaction plays a role in gTuRC activation. Phosphorylated in vitro by CDK5. As to expression, expressed in testis, thymus, heart and brain.

It localises to the cytoplasm. The protein resides in the cytoskeleton. It is found in the microtubule organizing center. Its subcellular location is the centrosome. The protein localises to the golgi apparatus. In terms of biological role, potential regulator of CDK5 activity via its interaction with CDK5R1. Negative regulator of centriole disengagement (licensing) which maintains centriole engagement and cohesion. Involved in regulation of mitotic spindle orientation. Plays a role in the spindle checkpoint activation by acting as a transcriptional regulator of both BUBR1 and MAD2 promoter. Together with EB1/MAPRE1, may promote microtubule polymerization, bundle formation, growth and dynamics at the plus ends. Regulates centrosomal maturation by recruitment of the gamma-tubulin ring complex (gTuRC) onto centrosomes. Required for the recruitment of AKAP9 to centrosomes. Plays a role in neurogenesis. Contrary to higher mammalian orthologs, including human, chimpanzee, bovine and dog, does not interact with EB1/MAPRE1, therefore its function in the regulation of microtubule dynamics is unclear. This Mus musculus (Mouse) protein is CDK5 regulatory subunit-associated protein 2 (Cdk5rap2).